The primary structure comprises 602 residues: uncharacterized protein (602 aa).

Positions 271 to 472 (IIDILADILI…RDEEVAKYIF (202 aa)) constitute an MCM domain. Position 315–322 (315–322 (TEVGIDKT)) interacts with ATP.

The protein belongs to the MCM family.

This is an uncharacterized protein from Methanocaldococcus jannaschii (strain ATCC 43067 / DSM 2661 / JAL-1 / JCM 10045 / NBRC 100440) (Methanococcus jannaschii).